A 711-amino-acid chain; its full sequence is Nucleolin (711 aa).

The interval 1 to 304 (MVKLAKAGKN…KKQKVEGTEP (304 aa)) is disordered. 3 positions are modified to N6-acetyllysine: Lys-9, Lys-15, and Lys-16. Acidic residues predominate over residues 24-43 (VEEDSEDEEMSEDEEDDSSG). Phosphoserine occurs at positions 28, 34, 41, and 42. Over residues 56–107 (AAATSAKKVVVSPTKKVAVATPAKKAAVTPGKKAAATPAKKTVTPAKAVATP) the composition is skewed to low complexity. Repeat unit 1 spans residues 58–65 (ATSAKKVV). Positions 58 to 135 (ATSAKKVVVS…GAAIPAKGAK (78 aa)) are 8 X 8 AA tandem repeats of X-T-P-X-K-K-X-X. Ser-67 is subject to Phosphoserine. Phosphothreonine is present on residues Thr-69, Thr-76, Thr-84, and Thr-92. 3 consecutive repeat copies span residues 75–82 (ATPAKKAA), 83–90 (VTPGKKAA), and 91–98 (ATPAKKTV). Position 96 is an N6-acetyllysine (Lys-96). Position 99 is a phosphothreonine (Thr-99). One copy of the 5; truncated repeat lies at 99 to 104 (TPAKAV). Lys-102 carries the post-translational modification N6-acetyllysine. The stretch at 105–112 (ATPGKKGA) is repeat 6. At Thr-106 the chain carries Phosphothreonine. Lys-109 carries the post-translational modification N6-acetyllysine. Thr-113 is modified (phosphothreonine). At Lys-116 the chain carries N6-acetyllysine. A run of 2 repeats spans residues 120–127 (ATPGKKGA) and 128–135 (AIPAKGAK). Thr-121 carries the phosphothreonine modification. Residues 122–137 (PGKKGAAIPAKGAKNG) are compositionally biased toward low complexity. Residue Lys-124 is modified to N6-acetyllysine. Ser-145, Ser-153, Ser-184, and Ser-207 each carry phosphoserine. 2 stretches are compositionally biased toward acidic residues: residues 145 to 171 (SDEEEEDDSEEDDEDDEDEDEDEDEIE) and 184 to 212 (SEDEDDEDDEDDEDEDDDDEEDDSEEEAM). Position 215 is a phosphothreonine (Thr-215). Acidic residues predominate over residues 235-273 (EDEDEEEDDEDEDDDDDEDDEDEDDDDEDEEEEEEEEEP). Residues 274-301 (VKEAPGKRKKEMAKQKAAPEAKKQKVEG) show a composition bias toward basic and acidic residues. Lys-298 participates in a covalent cross-link: Glycyl lysine isopeptide (Lys-Gly) (interchain with G-Cter in SUMO1); alternate. Residue Lys-298 forms a Glycyl lysine isopeptide (Lys-Gly) (interchain with G-Cter in SUMO2); alternate linkage. Thr-302 carries the phosphothreonine modification. RRM domains follow at residues 308–384 (FNLF…KPKG) and 394–467 (RTLL…YTGE). Lys-319 is modified (N6-acetyllysine). Lys-325 participates in a covalent cross-link: Glycyl lysine isopeptide (Lys-Gly) (interchain with G-Cter in SUMO1); alternate. Residue Lys-325 forms a Glycyl lysine isopeptide (Lys-Gly) (interchain with G-Cter in SUMO2); alternate linkage. An N6-acetyllysine modification is found at Lys-349. Phosphoserine is present on Ser-357. The residue at position 368 (Thr-368) is a Phosphothreonine. A Glycyl lysine isopeptide (Lys-Gly) (interchain with G-Cter in SUMO2) cross-link involves residue Lys-371. Residue Lys-378 forms a Glycyl lysine isopeptide (Lys-Gly) (interchain with G-Cter in SUMO2); alternate linkage. N6-acetyllysine; alternate is present on Lys-378. An N6-acetyllysine mark is found at Lys-399 and Lys-404. Thr-406 carries the post-translational modification Phosphothreonine. N6-acetyllysine is present on residues Lys-428 and Lys-445. Ser-459 and Ser-461 each carry phosphoserine. Residues Lys-468 and Lys-478 each carry the N6-acetyllysine modification. One can recognise an RRM 3 domain in the interval 487–561 (KTLVLSNLSY…RAIRLELQGP (75 aa)). Residue Lys-514 forms a Glycyl lysine isopeptide (Lys-Gly) (interchain with G-Cter in SUMO2); alternate linkage. Residue Lys-514 is modified to N6-acetyllysine; alternate. At Lys-522 the chain carries N6-acetyllysine. Ser-564 is modified (phosphoserine). Position 573 is an N6-acetyllysine (Lys-573). In terms of domain architecture, RRM 4 spans 573-648 (KTLFVKGLSE…NKVTLDWAKP (76 aa)). Lys-578 is covalently cross-linked (Glycyl lysine isopeptide (Lys-Gly) (interchain with G-Cter in SUMO2); alternate). An N6-acetyllysine; alternate modification is found at Lys-578. Phosphoserine is present on Ser-581. Lys-590 participates in a covalent cross-link: Glycyl lysine isopeptide (Lys-Gly) (interchain with G-Cter in SUMO1); alternate. A Glycyl lysine isopeptide (Lys-Gly) (interchain with G-Cter in SUMO2); alternate cross-link involves residue Lys-590. Residues Ser-592 and Ser-620 each carry the phosphoserine modification. Residue Lys-625 forms a Glycyl lysine isopeptide (Lys-Gly) (interchain with G-Cter in SUMO2) linkage. The tract at residues 641–711 (VTLDWAKPKG…KPQGKKTKFE (71 aa)) is disordered. The residue at position 647 (Lys-647) is an N6-acetyllysine. Over residues 651–697 (EGGFGGRGGGRGGFGGRGGGRGGRGGFGGRGRGGFGGRGGFRGGRGG) the composition is skewed to gly residues. 9 positions are modified to asymmetric dimethylarginine: Arg-657, Arg-661, Arg-667, Arg-671, Arg-674, Arg-680, Arg-682, Arg-688, and Arg-692. Asymmetric dimethylarginine; alternate is present on Arg-695. Arg-695 is modified (omega-N-methylarginine; alternate). Over residues 698–711 (GGDHKPQGKKTKFE) the composition is skewed to basic and acidic residues.

Identified in a IGF2BP1-dependent mRNP granule complex containing untranslated mRNAs. Component of the SWAP complex that consists of NPM1, NCL/nucleolin, PARP1 and SWAP70. Component of a complex which is at least composed of HTATSF1/Tat-SF1, the P-TEFb complex components CDK9 and CCNT1, RNA polymerase II, SUPT5H, and NCL/nucleolin. Interacts with AICDA. Interacts with APTX. Interacts with C1QBP. Interacts with ERBB4. Interacts (via C-terminus) with FMR1 isoform 6 (via N-terminus). Interacts with GZF1; this interaction is important for nucleolar localization of GZF1. Interacts with NSUN2. Interacts with NVL. Interacts (via N-terminus domain) with SETX. Interacts (via RRM1 and C-terminal RRM4/Arg/Gly-rich domains) with TERT; the interaction is important for nucleolar localization of TERT. Interacts with WDR46. Interacts with ZFP36. Interacts with LRRC34. Interacts with RRP1B. Interacts with HNRNPU; this interaction occurs during mitosis. Interacts with RIOK1; RIOK1 recruits NCL to PRMT5 for symmetrically methylation. Interacts with ZBTB7B. Interacts with MDK; this interaction promotes NCL clustering and lateral movements of this complex into lipid rafts leading to MDK internalization. Interacts with HDGF. Interacts with ALKBH2. Interacts with IGFBP5; this interaction is necessary for IGFBP5 localization to the nucleus. Some glutamate residues are glycylated by TTLL8. This modification occurs exclusively on glutamate residues and results in a glycine chain on the gamma-carboxyl group. Post-translationally, symmetrically methylated by PRMT5.

It is found in the nucleus. The protein resides in the nucleolus. Its subcellular location is the cytoplasm. In terms of biological role, nucleolin is the major nucleolar protein of growing eukaryotic cells. It is found associated with intranucleolar chromatin and pre-ribosomal particles. It induces chromatin decondensation by binding to histone H1. It is thought to play a role in pre-rRNA transcription and ribosome assembly. May play a role in the process of transcriptional elongation. Binds RNA oligonucleotides with 5'-UUAGGG-3' repeats more tightly than the telomeric single-stranded DNA 5'-TTAGGG-3' repeats. The sequence is that of Nucleolin (NCL) from Macaca fascicularis (Crab-eating macaque).